Reading from the N-terminus, the 278-residue chain is Formamidopyrimidine-DNA glycosylase (278 aa).

The active-site Schiff-base intermediate with DNA is Pro-2. Glu-3 serves as the catalytic Proton donor. The active-site Proton donor; for beta-elimination activity is the Lys-60. Residues His-95 and Arg-114 each coordinate DNA. The FPG-type zinc finger occupies 244 to 278; that stretch reads WVYRRGGEPCRRCGTIIRRDKLSGRSTHWCPTCQG. Residue Arg-268 is the Proton donor; for delta-elimination activity of the active site.

Belongs to the FPG family. As to quaternary structure, monomer. It depends on Zn(2+) as a cofactor.

The catalysed reaction is Hydrolysis of DNA containing ring-opened 7-methylguanine residues, releasing 2,6-diamino-4-hydroxy-5-(N-methyl)formamidopyrimidine.. The enzyme catalyses 2'-deoxyribonucleotide-(2'-deoxyribose 5'-phosphate)-2'-deoxyribonucleotide-DNA = a 3'-end 2'-deoxyribonucleotide-(2,3-dehydro-2,3-deoxyribose 5'-phosphate)-DNA + a 5'-end 5'-phospho-2'-deoxyribonucleoside-DNA + H(+). In terms of biological role, involved in base excision repair of DNA damaged by oxidation or by mutagenic agents. Acts as a DNA glycosylase that recognizes and removes damaged bases. Has a preference for oxidized purines, such as 7,8-dihydro-8-oxoguanine (8-oxoG). Has AP (apurinic/apyrimidinic) lyase activity and introduces nicks in the DNA strand. Cleaves the DNA backbone by beta-delta elimination to generate a single-strand break at the site of the removed base with both 3'- and 5'-phosphates. This Parasynechococcus marenigrum (strain WH8102) protein is Formamidopyrimidine-DNA glycosylase.